Reading from the N-terminus, the 261-residue chain is Lys-63-specific deubiquitinase BRCC36 (261 aa).

The MPN domain maps to 6–149 (VHIQGDAFLV…YTCFQSVQAQ (144 aa)). Zn(2+) is bound by residues histidine 92, histidine 94, and aspartate 105. A JAMM motif motif is present at residues 92–105 (HSHPHITVWPSHVD).

This sequence belongs to the peptidase M67A family. BRCC36 subfamily. As to quaternary structure, component of the BRCA1-A complex, at least composed of brca1, bard1, uimc1/rap80, abraxas1, brcc3/brcc36, babam2 and babam1/nba1. In the BRCA1-A complex, interacts directly with abraxas1 and babam2. Component of the BRISC complex, at least composed of abraxas2, brcc3/brcc36, babam2 and babam1/nba1. Within the complex, interacts directly with abraxas2. Both the BRCA1-A complex and the BRISC complex bind polyubiquitin. The cofactor is Zn(2+).

Its subcellular location is the nucleus. It localises to the cytoplasm. The protein resides in the cytoskeleton. It is found in the spindle pole. In terms of biological role, metalloprotease that specifically cleaves 'Lys-63'-linked polyubiquitin chains. Does not have activity toward 'Lys-48'-linked polyubiquitin chains. Component of the BRCA1-A complex, a complex that specifically recognizes 'Lys-63'-linked ubiquitinated histones H2A and H2AX at DNA lesions sites, leading to target the brca1-bard1 heterodimer to sites of DNA damage at double-strand breaks (DSBs). In the BRCA1-A complex, it specifically removes 'Lys-63'-linked ubiquitin on histones H2A and H2AX, antagonizing the rnf8-dependent ubiquitination at double-strand breaks (DSBs). Catalytic subunit of the BRISC complex, a multiprotein complex that specifically cleaves 'Lys-63'-linked ubiquitin in various substrates. Mediates the specific 'Lys-63'-specific deubiquitination associated with the COP9 signalosome complex (CSN), via the interaction of the BRISC complex with the CSN complex. The BRISC complex is required for normal mitotic spindle assembly and microtubule attachment to kinetochores via its role in deubiquitinating numa1. Plays a role in interferon signaling via its role in the deubiquitination of the interferon receptor ifnar1; deubiquitination increases ifnar1 activity by enhancing its stability and cell surface expression. Acts as a regulator of the NLRP3 inflammasome by mediating deubiquitination of nlrp3. Down-regulates the response to bacterial lipopolysaccharide (LPS) via its role in ifnar1 deubiquitination. The chain is Lys-63-specific deubiquitinase BRCC36 (brcc3) from Xenopus tropicalis (Western clawed frog).